The primary structure comprises 31 residues: MSDIN-like toxin proprotein 4 (31 aa).

Positions 1 to 10 (MSDINGTRLP) are excised as a propeptide. The cyclopeptide (Trp-Pro) cross-link spans 11 to 16 (WLATCP). Positions 17-31 (CVGEDVNPTLSRGER) are excised as a propeptide.

It belongs to the MSDIN fungal toxin family. Post-translationally, processed by the macrocyclase-peptidase enzyme POPB to yield a toxic cyclic hexapeptide. POPB first removes 10 residues from the N-terminus. Conformational trapping of the remaining peptide forces the enzyme to release this intermediate rather than proceed to macrocyclization. The enzyme rebinds the remaining peptide in a different conformation and catalyzes macrocyclization of the N-terminal 6 residues.

In terms of biological role, probable toxin that belongs to the MSDIN-like toxin family responsible for a large number of food poisoning cases and deaths. The polypeptide is MSDIN-like toxin proprotein 4 (Amanita phalloides (Death cap)).